Here is a 355-residue protein sequence, read N- to C-terminus: uncharacterized protein (355 aa).

It belongs to the serpin family. Poxviruses subfamily.

This is an uncharacterized protein from Vertebrata (FPV).